Consider the following 92-residue polypeptide: Small ribosomal subunit protein uS19 (92 aa).

Belongs to the universal ribosomal protein uS19 family.

Functionally, protein S19 forms a complex with S13 that binds strongly to the 16S ribosomal RNA. This is Small ribosomal subunit protein uS19 from Leuconostoc mesenteroides subsp. mesenteroides (strain ATCC 8293 / DSM 20343 / BCRC 11652 / CCM 1803 / JCM 6124 / NCDO 523 / NBRC 100496 / NCIMB 8023 / NCTC 12954 / NRRL B-1118 / 37Y).